The sequence spans 119 residues: NADH-quinone oxidoreductase subunit A (119 aa).

Transmembrane regions (helical) follow at residues 9-29, 63-83, and 88-108; these read VLLFILVGIGVGVVPLVLGYV, LVAILFILFDLEIAFLFPWAV, and VGMTGFVAVIVFLAILVVGFA.

The protein belongs to the complex I subunit 3 family. NDH-1 is composed of 14 different subunits. Subunits NuoA, H, J, K, L, M, N constitute the membrane sector of the complex.

It localises to the cell inner membrane. The catalysed reaction is a quinone + NADH + 5 H(+)(in) = a quinol + NAD(+) + 4 H(+)(out). In terms of biological role, NDH-1 shuttles electrons from NADH, via FMN and iron-sulfur (Fe-S) centers, to quinones in the respiratory chain. The immediate electron acceptor for the enzyme in this species is believed to be ubiquinone. Couples the redox reaction to proton translocation (for every two electrons transferred, four hydrogen ions are translocated across the cytoplasmic membrane), and thus conserves the redox energy in a proton gradient. The sequence is that of NADH-quinone oxidoreductase subunit A from Paracidovorax citrulli (strain AAC00-1) (Acidovorax citrulli).